Consider the following 72-residue polypeptide: Large ribosomal subunit protein bL32 (72 aa).

This sequence belongs to the bacterial ribosomal protein bL32 family.

The sequence is that of Large ribosomal subunit protein bL32 from Dehalococcoides mccartyi (strain ATCC BAA-2100 / JCM 16839 / KCTC 5957 / BAV1).